A 207-amino-acid polypeptide reads, in one-letter code: MTKVALYKQDGTQAGEVELADSIFAIEPNEAVVTDAVLMQRASLRQGTHSVKNRSTVSGGGRKPWRQKGTGNARQGSIRAPQWRGGAISMGPIPRPYAYKINRKAYRLALKSVLSDKVSAKNFVIIDELNFEKPSTKAIADSLNKLEATKKTLLVVDDANENAKLSARNLPNVQVTTASGVNVYDLVKAQKVVIVQSAVKQVEEVLG.

Polar residues predominate over residues 45–57 (RQGTHSVKNRSTV). Positions 45–77 (RQGTHSVKNRSTVSGGGRKPWRQKGTGNARQGS) are disordered.

It belongs to the universal ribosomal protein uL4 family. In terms of assembly, part of the 50S ribosomal subunit.

Its function is as follows. One of the primary rRNA binding proteins, this protein initially binds near the 5'-end of the 23S rRNA. It is important during the early stages of 50S assembly. It makes multiple contacts with different domains of the 23S rRNA in the assembled 50S subunit and ribosome. In terms of biological role, forms part of the polypeptide exit tunnel. The sequence is that of Large ribosomal subunit protein uL4 from Oenococcus oeni (strain ATCC BAA-331 / PSU-1).